We begin with the raw amino-acid sequence, 144 residues long: uncharacterized protein (144 aa).

Residues 13 to 120 (IFCGIVEGNV…VPKYETGLGF (108 aa)) form the HIT domain. The short motif at 105–109 (HYHMH) is the Histidine triad motif element.

This is an uncharacterized protein from Mycoplasma pneumoniae (strain ATCC 29342 / M129 / Subtype 1) (Mycoplasmoides pneumoniae).